The chain runs to 223 residues: Noggin-3 (223 aa).

Positions 1-23 are cleaved as a signal peptide; sequence MDNIPYFLATVLIFSLGFRIEEG. Asn-60 and Asn-93 each carry an N-linked (GlcNAc...) asparagine glycan.

This sequence belongs to the noggin family. In terms of assembly, homodimer; disulfide-linked.

It localises to the secreted. May function as an inhibitor of bone morphogenetic proteins (BMP) signaling during later stages of development including late phases of dorsoventral patterning, to refine the early pattern set up by the interaction of chordino and BMP2/4. Not involved in organizer function or early phases of dorsoventral pattern formation. This Danio rerio (Zebrafish) protein is Noggin-3 (nog3).